A 105-amino-acid chain; its full sequence is MRPEKLDAEAIAEQLHRMEGWVLAEDGASIWKAFRFRNFAEAFSFMTQCALAAEKLNHHPEWFNVYNKVDVTLSTHDASGLTELDFKLAAKMDQAAAGRMPDHLK.

This sequence belongs to the pterin-4-alpha-carbinolamine dehydratase family.

The catalysed reaction is (4aS,6R)-4a-hydroxy-L-erythro-5,6,7,8-tetrahydrobiopterin = (6R)-L-erythro-6,7-dihydrobiopterin + H2O. The protein is Putative pterin-4-alpha-carbinolamine dehydratase of Sinorhizobium fredii (strain NBRC 101917 / NGR234).